We begin with the raw amino-acid sequence, 786 residues long: Mitochondrial intermediate peptidase (786 aa).

Residues 1-29 (MSSILLRSYRHHAKVWTRPSSKSSFIRSL) constitute a mitochondrion transit peptide. A Zn(2+)-binding site is contributed by His-567. Glu-568 is an active-site residue. Residues His-571 and His-574 each contribute to the Zn(2+) site.

The protein belongs to the peptidase M3 family. Requires Zn(2+) as cofactor.

Its subcellular location is the mitochondrion matrix. It carries out the reaction Release of an N-terminal octapeptide as second stage of processing of some proteins imported into the mitochondrion.. Cleaves proteins, imported into the mitochondrion, to their mature size. While most mitochondrial precursor proteins are processed to the mature form in one step by mitochondrial processing peptidase (MPP), the sequential cleavage by MIP of an octapeptide after initial processing by MPP is a required step for a subgroup of nuclear-encoded precursor proteins destined for the matrix or the inner membrane. In Meyerozyma guilliermondii (strain ATCC 6260 / CBS 566 / DSM 6381 / JCM 1539 / NBRC 10279 / NRRL Y-324) (Yeast), this protein is Mitochondrial intermediate peptidase (OCT1).